The following is a 168-amino-acid chain: Protein OPG162 (168 aa).

Over 1–14 the chain is Intravirion; sequence MKSLNRQTVSRFKK. Residues 15–37 form a helical membrane-spanning segment; the sequence is LSVPAAIMMILSTIISGIGTFLH. The Virion surface portion of the chain corresponds to 38–168; that stretch reads YKEELMPSAC…SVLCVKRFYK (131 aa). In terms of domain architecture, C-type lectin spans 54–163; sequence YDKHCYLDTN…CKSTQSVLCV (110 aa). Intrachain disulfides connect Cys-75–Cys-162 and Cys-141–Cys-154. A glycan (N-linked (GlcNAc...) asparagine; by host) is linked at Asn-133.

It belongs to the orthopoxvirus OPG162 protein family. In terms of assembly, interacts with protein OPG161. Interacts with protein OPG164. Interacts with protein OPG190.

Its subcellular location is the virion membrane. The protein localises to the host Golgi apparatus. Its function is as follows. Forms a complex with OPG162 and OPG190 to coordinate the incorporation of OPG164 into wrapped enveloped virion (EV) membranes and, subsequently, the production of actin tails. Therefore plays an essential role in efficient cell-to-cell spread of viral particles. The polypeptide is Protein OPG162 (OPG162) (Variola virus (isolate Human/India/Ind3/1967) (VARV)).